The primary structure comprises 214 residues: Protein DMP6 (214 aa).

Transmembrane regions (helical) follow at residues leucine 52 to threonine 72, phenylalanine 83 to aspartate 103, phenylalanine 143 to aspartate 163, and valine 178 to alanine 198.

It belongs to the plant DMP1 protein family. In terms of tissue distribution, expressed constitutively in leaves, stems, flowers, siliques and roots (e.g. root hairs).

Its subcellular location is the vacuole membrane. Functionally, involved in membrane remodeling. This chain is Protein DMP6, found in Arabidopsis thaliana (Mouse-ear cress).